Here is a 173-residue protein sequence, read N- to C-terminus: Protein FAM180A (173 aa).

An N-terminal signal peptide occupies residues 1–17 (MSWKALTILLVFSSTQA).

This sequence belongs to the FAM180 family.

The protein resides in the secreted. In Mus musculus (Mouse), this protein is Protein FAM180A (Fam180a).